The following is a 362-amino-acid chain: Sulfate/thiosulfate import ATP-binding protein CysA (362 aa).

Positions 3-237 constitute an ABC transporter domain; it reads IEIHDLSKQF…PANPFVYEFL (235 aa). An ATP-binding site is contributed by 35-42; that stretch reads GPSGSGKT.

The protein belongs to the ABC transporter superfamily. Sulfate/tungstate importer (TC 3.A.1.6) family. As to quaternary structure, the complex is composed of two ATP-binding proteins (CysA), two transmembrane proteins (CysT and CysW) and a solute-binding protein (CysP).

The protein localises to the cell inner membrane. It carries out the reaction sulfate(out) + ATP + H2O = sulfate(in) + ADP + phosphate + H(+). The catalysed reaction is thiosulfate(out) + ATP + H2O = thiosulfate(in) + ADP + phosphate + H(+). Functionally, part of the ABC transporter complex CysAWTP involved in sulfate/thiosulfate import. Responsible for energy coupling to the transport system. The sequence is that of Sulfate/thiosulfate import ATP-binding protein CysA from Nitrosomonas europaea (strain ATCC 19718 / CIP 103999 / KCTC 2705 / NBRC 14298).